The primary structure comprises 401 residues: MNEVVIPSVLLDVPVSAAPVHKQNLLDLDREGLEHFFADTLGEARYRAHQVMKWIHHRYVTDFDQMTDLGKALRAKLHQHAEVLVPNVVFDKPSTDGTHKWLLAMGTDGKNAIETVYIPDKGRGTLCVSSQVGCGLNCTFCSTATQGFNRNLTTAEIIGQVWVAARHLGNVPHQQRRLTNVVMMGMGEPLMNFDNVVRAMSVMRDDLGYGLASKRVTLSTSGLVPMIDRLATESDVSLAVSLHAANDVLRESLVPLNKKYPIAELMESCARYLRGNKKRDSVTFEYTLMKGINDQPEHARQLARLMRQFDNAVQSKDAGKVNLIPFNPFPGTRYERSGETEIRAFQKILLDAQVLTMVRRTRGDDIDAACGQLKGQVMDRTRRQAEFRRTLEGQADRDAAA.

Glu114 acts as the Proton acceptor in catalysis. The Radical SAM core domain maps to 120-365 (DKGRGTLCVS…TMVRRTRGDD (246 aa)). Residues Cys127 and Cys370 are joined by a disulfide bond. [4Fe-4S] cluster-binding residues include Cys134, Cys138, and Cys141. S-adenosyl-L-methionine contacts are provided by residues 187-188 (GE), Ser219, 241-243 (SLH), and Asn327. The active-site S-methylcysteine intermediate is the Cys370.

Belongs to the radical SAM superfamily. RlmN family. The cofactor is [4Fe-4S] cluster.

Its subcellular location is the cytoplasm. It catalyses the reaction adenosine(2503) in 23S rRNA + 2 reduced [2Fe-2S]-[ferredoxin] + 2 S-adenosyl-L-methionine = 2-methyladenosine(2503) in 23S rRNA + 5'-deoxyadenosine + L-methionine + 2 oxidized [2Fe-2S]-[ferredoxin] + S-adenosyl-L-homocysteine. It carries out the reaction adenosine(37) in tRNA + 2 reduced [2Fe-2S]-[ferredoxin] + 2 S-adenosyl-L-methionine = 2-methyladenosine(37) in tRNA + 5'-deoxyadenosine + L-methionine + 2 oxidized [2Fe-2S]-[ferredoxin] + S-adenosyl-L-homocysteine. Functionally, specifically methylates position 2 of adenine 2503 in 23S rRNA and position 2 of adenine 37 in tRNAs. m2A2503 modification seems to play a crucial role in the proofreading step occurring at the peptidyl transferase center and thus would serve to optimize ribosomal fidelity. The protein is Dual-specificity RNA methyltransferase RlmN of Xanthomonas campestris pv. campestris (strain 8004).